The primary structure comprises 160 residues: 6,7-dimethyl-8-ribityllumazine synthase (160 aa).

Residues Trp-27, 59-61 (AIE), and 81-83 (VVI) contribute to the 5-amino-6-(D-ribitylamino)uracil site. 86–87 (QT) provides a ligand contact to (2S)-2-hydroxy-3-oxobutyl phosphate. His-89 (proton donor) is an active-site residue. Asn-114 lines the 5-amino-6-(D-ribitylamino)uracil pocket. A (2S)-2-hydroxy-3-oxobutyl phosphate-binding site is contributed by Arg-128.

It belongs to the DMRL synthase family. Homopentamer.

It carries out the reaction (2S)-2-hydroxy-3-oxobutyl phosphate + 5-amino-6-(D-ribitylamino)uracil = 6,7-dimethyl-8-(1-D-ribityl)lumazine + phosphate + 2 H2O + H(+). It participates in cofactor biosynthesis; riboflavin biosynthesis; riboflavin from 2-hydroxy-3-oxobutyl phosphate and 5-amino-6-(D-ribitylamino)uracil: step 1/2. In terms of biological role, catalyzes the formation of 6,7-dimethyl-8-ribityllumazine by condensation of 5-amino-6-(D-ribitylamino)uracil with 3,4-dihydroxy-2-butanone 4-phosphate. This is the penultimate step in the biosynthesis of riboflavin. This chain is 6,7-dimethyl-8-ribityllumazine synthase, found in Mycobacterium avium (strain 104).